Consider the following 131-residue polypeptide: Fumarate reductase subunit C (131 aa).

A run of 3 helical transmembrane segments spans residues 30–50, 58–78, and 109–129; these read EGTCLPQLWFSLVVLFGVFAL, AGFVGFLSNPILMLINIVTLI, and IVRGLWGLTIVVTVVILAVAL.

The protein belongs to the FrdC family. As to quaternary structure, part of an enzyme complex containing four subunits: a flavoprotein (FrdA), an iron-sulfur protein (FrdB), and two hydrophobic anchor proteins (FrdC and FrdD).

It is found in the cell inner membrane. Two distinct, membrane-bound, FAD-containing enzymes are responsible for the catalysis of fumarate and succinate interconversion; fumarate reductase is used in anaerobic growth, and succinate dehydrogenase is used in aerobic growth. Anchors the catalytic components of the fumarate reductase complex to the cell inner membrane, binds quinones. The sequence is that of Fumarate reductase subunit C from Proteus vulgaris.